The primary structure comprises 123 residues: WAP four-disulfide core domain protein 5 (123 aa).

The first 24 residues, 1-24, serve as a signal peptide directing secretion; sequence MRTQSLLLLGALLAVGSQLPAVFG. WAP domains follow at residues 27–73 and 74–121; these read KGEK…CVPR and VSVK…RDPA. Intrachain disulfides connect Cys34-Cys62, Cys41-Cys66, Cys49-Cys61, Cys55-Cys70, Cys81-Cys109, Cys88-Cys113, Cys96-Cys108, and Cys102-Cys117.

Its subcellular location is the secreted. Putative acid-stable proteinase inhibitor. In Pan troglodytes (Chimpanzee), this protein is WAP four-disulfide core domain protein 5 (WFDC5).